The following is a 1058-amino-acid chain: Vacuolar protein sorting-associated protein 54 (1058 aa).

Positions 369 to 389 (SKKIVEVHERYEQKKKLLAKL) form a coiled coil.

Belongs to the VPS54 family. As to quaternary structure, component of the Golgi-associated retrograde protein (GARP) complex, also called VFT (VPS fifty-three) complex, composed of vps-51, vps-52, vps-53 and vps-54. Within the complex interacts with vps-52 and vps-53.

It localises to the golgi apparatus. The protein resides in the trans-Golgi network. Acts as a component of the GARP complex that is involved in retrograde transport from early and late endosomes to the trans-Golgi network (TGN). The GARP complex facilitates tethering as well as SNARE complex assembly at the Golgi. The protein is Vacuolar protein sorting-associated protein 54 of Caenorhabditis elegans.